The primary structure comprises 267 residues: Putative hydro-lyase Arth_3576 (267 aa).

This sequence belongs to the D-glutamate cyclase family.

The sequence is that of Putative hydro-lyase Arth_3576 from Arthrobacter sp. (strain FB24).